The chain runs to 374 residues: MPLLTTPYAELDLIRQPEQANDPLQAFDAADEYLLAQLHDQAPDANCRVLVLNDSFGALAASLAGQLQVVSSGDSHLGHLALEKNLARNGLPFDSVPFVPASEHWQGPFDRVLVRVPKTLALLEEQLIRLQGQLAPGAQVIAGAMIKHLPRAAGDLMEKYIGPVQASLALKKARLLTATVAERPLAKSPYPSCYRLDVPALDLINHANVFCREGLDIGTRAFLPHLPRDLGRARVADLGCGNGVLAIASALANPEAEYTLVDESYMAVQSAQENWLAALGERPATFFAADGLAGLEKQSLDVVLCNPPFHQQQVVGDFLAWRMFQQAREALVVGGALYIVGNRHLGYHSKLARLFRGVEQVAATPKFVILKARK.

It belongs to the methyltransferase superfamily. RlmG family.

It is found in the cytoplasm. The enzyme catalyses guanosine(1835) in 23S rRNA + S-adenosyl-L-methionine = N(2)-methylguanosine(1835) in 23S rRNA + S-adenosyl-L-homocysteine + H(+). In terms of biological role, specifically methylates the guanine in position 1835 (m2G1835) of 23S rRNA. This chain is Ribosomal RNA large subunit methyltransferase G, found in Pseudomonas putida (strain ATCC 700007 / DSM 6899 / JCM 31910 / BCRC 17059 / LMG 24140 / F1).